We begin with the raw amino-acid sequence, 378 residues long: Dual-specificity RNA methyltransferase RlmN (378 aa).

Glu97 functions as the Proton acceptor in the catalytic mechanism. The Radical SAM core domain occupies 103 to 341 (EGDRATLCVS…VMVRKTRGDD (239 aa)). A disulfide bond links Cys110 and Cys346. 3 residues coordinate [4Fe-4S] cluster: Cys117, Cys121, and Cys124. S-adenosyl-L-methionine contacts are provided by residues 171–172 (GE), Ser203, 225–227 (SLH), and Asn303. The active-site S-methylcysteine intermediate is Cys346.

The protein belongs to the radical SAM superfamily. RlmN family. [4Fe-4S] cluster is required as a cofactor.

Its subcellular location is the cytoplasm. It carries out the reaction adenosine(2503) in 23S rRNA + 2 reduced [2Fe-2S]-[ferredoxin] + 2 S-adenosyl-L-methionine = 2-methyladenosine(2503) in 23S rRNA + 5'-deoxyadenosine + L-methionine + 2 oxidized [2Fe-2S]-[ferredoxin] + S-adenosyl-L-homocysteine. The enzyme catalyses adenosine(37) in tRNA + 2 reduced [2Fe-2S]-[ferredoxin] + 2 S-adenosyl-L-methionine = 2-methyladenosine(37) in tRNA + 5'-deoxyadenosine + L-methionine + 2 oxidized [2Fe-2S]-[ferredoxin] + S-adenosyl-L-homocysteine. Functionally, specifically methylates position 2 of adenine 2503 in 23S rRNA and position 2 of adenine 37 in tRNAs. m2A2503 modification seems to play a crucial role in the proofreading step occurring at the peptidyl transferase center and thus would serve to optimize ribosomal fidelity. The polypeptide is Dual-specificity RNA methyltransferase RlmN (Idiomarina loihiensis (strain ATCC BAA-735 / DSM 15497 / L2-TR)).